The following is a 683-amino-acid chain: Dipeptidyl-peptidase 5 (683 aa).

Positions methionine 1–alanine 19 are cleaved as a signal peptide. 6 N-linked (GlcNAc...) asparagine glycosylation sites follow: asparagine 53, asparagine 69, asparagine 103, asparagine 116, asparagine 126, and asparagine 400. Residues serine 535, aspartate 617, and histidine 649 each act as charge relay system in the active site.

Belongs to the peptidase S9C family.

It localises to the secreted. Its subcellular location is the cytoplasm. It is found in the nucleus. The sequence is that of Dipeptidyl-peptidase 5 from Schizosaccharomyces pombe (strain 972 / ATCC 24843) (Fission yeast).